Here is a 342-residue protein sequence, read N- to C-terminus: Ketol-acid reductoisomerase (NADP(+)) (342 aa).

The KARI N-terminal Rossmann domain maps to 2–181; it reads VKVYYNGDIK…GGARAGVLET (180 aa). Residues 25-28, Arg48, Ser52, and 82-85 contribute to the NADP(+) site; these read YGSQ and DEQQ. His107 is an active-site residue. Residue Gly133 coordinates NADP(+). The 146-residue stretch at 182 to 327 folds into the KARI C-terminal knotted domain; the sequence is TFKEETETDL…RKLREMMPFV (146 aa). Positions 190, 194, 226, and 230 each coordinate Mg(2+). Ser251 provides a ligand contact to substrate.

This sequence belongs to the ketol-acid reductoisomerase family. Mg(2+) serves as cofactor.

The catalysed reaction is (2R)-2,3-dihydroxy-3-methylbutanoate + NADP(+) = (2S)-2-acetolactate + NADPH + H(+). The enzyme catalyses (2R,3R)-2,3-dihydroxy-3-methylpentanoate + NADP(+) = (S)-2-ethyl-2-hydroxy-3-oxobutanoate + NADPH + H(+). It functions in the pathway amino-acid biosynthesis; L-isoleucine biosynthesis; L-isoleucine from 2-oxobutanoate: step 2/4. Its pathway is amino-acid biosynthesis; L-valine biosynthesis; L-valine from pyruvate: step 2/4. Functionally, involved in the biosynthesis of branched-chain amino acids (BCAA). Catalyzes an alkyl-migration followed by a ketol-acid reduction of (S)-2-acetolactate (S2AL) to yield (R)-2,3-dihydroxy-isovalerate. In the isomerase reaction, S2AL is rearranged via a Mg-dependent methyl migration to produce 3-hydroxy-3-methyl-2-ketobutyrate (HMKB). In the reductase reaction, this 2-ketoacid undergoes a metal-dependent reduction by NADPH to yield (R)-2,3-dihydroxy-isovalerate. This chain is Ketol-acid reductoisomerase (NADP(+)), found in Bacillus licheniformis (strain ATCC 14580 / DSM 13 / JCM 2505 / CCUG 7422 / NBRC 12200 / NCIMB 9375 / NCTC 10341 / NRRL NRS-1264 / Gibson 46).